The primary structure comprises 559 residues: DDB1- and CUL4-associated factor 10 (559 aa).

The disordered stretch occupies residues Met1–Pro119. 4 positions are modified to phosphoserine: Ser53, Ser63, Ser89, and Ser92. Positions Arg56–Gly86 are enriched in low complexity. A compositionally biased stretch (pro residues) spans Glu87–Arg97. At Arg134 the chain carries Omega-N-methylarginine. WD repeat units follow at residues Arg166–Thr205, Ala209–Cys247, Gly251–Cys290, and Phe296–Glu335. Ser349 carries the post-translational modification Phosphoserine. Low complexity predominate over residues Ser350 to Ser367. The interval Ser350–Leu396 is disordered. Over residues His370–Met381 the composition is skewed to basic and acidic residues. WD repeat units lie at residues Asp408–Ala448, Val470–Val508, and Ser526–Phe559.

It belongs to the WD repeat DCAF10 family. As to quaternary structure, interacts with DDB1.

The protein operates within protein modification; protein ubiquitination. In terms of biological role, may function as a substrate receptor for CUL4-DDB1 E3 ubiquitin-protein ligase complex. This Homo sapiens (Human) protein is DDB1- and CUL4-associated factor 10 (DCAF10).